The sequence spans 383 residues: Centractin (383 aa).

The interval 227 to 246 (PQKEEELLEPDSSSSKPVQP) is disordered.

This sequence belongs to the actin family. ARP1 subfamily.

It localises to the cytoplasm. The protein localises to the cytoskeleton. Its subcellular location is the microtubule organizing center. It is found in the centrosome. Functionally, component of a multi-subunit complex, PPK2 (poly P kinase complex 2) involved in microtubule based vesicle motility. It is associated with the centrosome. PPK2 complex can synthesize a poly chain of hundreds of phosphate residues linked by ATP-like bonds. The sequence is that of Centractin (arpA) from Dictyostelium discoideum (Social amoeba).